The primary structure comprises 1056 residues: Sucrose-phosphate synthase (1056 aa).

Positions 112–123 (HVERERGRREAT) are enriched in basic and acidic residues. Residues 112–132 (HVERERGRREATADMSEDLSE) are disordered. A phosphoserine mark is found at Ser-158 and Ser-424. Positions 681-700 (NWQRIDEGSENSDTDSAGDS) are disordered.

This sequence belongs to the glycosyltransferase 1 family. In terms of assembly, homodimer or homotetramer. Post-translationally, phosphorylated at Ser-158 and Ser-424.

It carries out the reaction beta-D-fructose 6-phosphate + UDP-alpha-D-glucose = sucrose 6(F)-phosphate + UDP + H(+). Its pathway is glycan biosynthesis; sucrose biosynthesis; sucrose from D-fructose 6-phosphate and UDP-alpha-D-glucose: step 1/2. Its activity is regulated as follows. Activity is regulated by phosphorylation and moderated by concentration of metabolites and light. In terms of biological role, plays a role in photosynthetic sucrose synthesis by catalyzing the rate-limiting step of sucrose biosynthesis from UDP-glucose and fructose- 6-phosphate. Involved in the regulation of carbon partitioning in the leaves of plants. May regulate the synthesis of sucrose and therefore play a major role as a limiting factor in the export of photoassimilates out of the leaf. Plays a role for sucrose availability that is essential for plant growth and fiber elongation. The chain is Sucrose-phosphate synthase (SPS1) from Spinacia oleracea (Spinach).